The following is a 100-amino-acid chain: Cell division protein DrpB (100 aa).

The Cytoplasmic segment spans residues 1–16 (MEYGSTKMEERLSRSP). A helical transmembrane segment spans residues 17–37 (GGKLALWAFYTWCGYFVWAMA). Over 38–64 (RYIWVMSRIPDAPVSGFESDLGSTAGK) the chain is Periplasmic. The helical transmembrane segment at 65-85 (WLGALVGFLFMALVGALLGSI) threads the bilayer. The Cytoplasmic segment spans residues 86–100 (AWYTRPRPARSRRYE).

The protein belongs to the DrpB family. As to quaternary structure, bacterial adenylate cyclase hybrid (BACTH) studies show interaction of this protein with DamX, FtsI, FtsN, FtsQ, YmgF, DedD, FtsA and MalF, as well as weaker interactions with DedD, MalG and PBP2, but this assay often generates false positive results.

The protein localises to the cell inner membrane. Functionally, a non-essential division protein that localizes to the septal ring in low ionic strength medium. Localizes to the septal ring in about 30% of observed cells before cell constriction occurs; localization occurs in low ionic strength medium (0 NaCl) and requires FtsZ but not FtsEX. Overexpression partially restores correct FtsI localization to the division septum in an ftsEX deletion. Isolated as a multicopy suppressor of an ftsEX deletion mutant; it does not suppress other cell division defects (e.g. ftsA, ftsI, ftsQ or ftsZ). This is Cell division protein DrpB from Escherichia coli (strain K12).